Reading from the N-terminus, the 237-residue chain is Ribosomal RNA small subunit methyltransferase G (237 aa).

Residues Gly-78, Phe-83, 129-130 (AE), and Arg-148 contribute to the S-adenosyl-L-methionine site.

Belongs to the methyltransferase superfamily. RNA methyltransferase RsmG family.

Its subcellular location is the cytoplasm. Functionally, specifically methylates the N7 position of a guanine in 16S rRNA. This chain is Ribosomal RNA small subunit methyltransferase G, found in Streptococcus thermophilus (strain CNRZ 1066).